The following is a 999-amino-acid chain: MVGDARPSGVRAGGCRGAVGSRTSSRALRPPLPPLSSLFVLFLAAPCAWAAGYKTCPKVKPDMLNVHLVPHTHDDVGWLKTVDQYFYGIYNNIQPAGVQYILDSVISSLLANPTRRFIYVEIAFFSRWWRQQTNATQKIVRELVRQGRLEFANGGWVMNDEATTHYGAIIDQMTLGLRFLEETFGSDGRPRVAWHIDPFGHSREQASLFAQMGFDGFFFGRLDYQDKKVRKKTLQMEQVWRASTSLKPPTADLFTSVLPNMYNPPEGLCWDMLCADKPVVEDTRSPEYNAKELVRYFLKLATDQGKLYRTKHTVMTMGSDFQYENANTWFKNLDKLIQLVNAQQRANGIRVNVLYSTPACYLWELNKANLSWSVKKDDFFPYADGPYMFWTGYFSSRPALKRYERLSYNFLQVCNQLEALAGPAANVGPYGSGDSAPLNEAMAVLQHHDAVSGTSRQHVANDYARQLSEGWRPCEVLMSNALAHLSGLKEDFAFCRKLNISICPLTQTAERFQVIVYNPLGRKVDWMVRLPVSKHVYLVKDPGGKIVPSDVVTIPSSDSQELLFSALVPAVGFSIYSVSQMPNQRPQKSWSRDLVIQNEYLRARFDPNTGLLMELENLEQNLLLPVRQAFYWYNASTGNNLSSQASGAYIFRPNQNKPLFVSHWAQTHLVKASLVQEVHQNFSAWCSQVVRLYPRQRHLELEWTVGPIPVGDGWGKEVISRFDTALATRGLFYTDSNGREILERRRNYRPTWKLNQTEPVAGNYYPVNSRIYITDGNMQLTVLTDRSQGGSSLRDGSLELMVHRRLLKDDARGVGEPLNKEGSGLWVRGRHLVLLDKKETAAARHRLQAEMEVLAPQVVLAQGGGARYRLEKAPRTQFSGLRRELPPSVRLLTLARWGPETLLLRLEHQFAVGEDSGRNLSSPVTLDLTNLFSAFTITNLRETTLAANQLLAYASRLQWTTDTGPTPHPSPSRPVSATITLQPMEIRTFLASVQWEEDG.

A disordered region spans residues 1–25 (MVGDARPSGVRAGGCRGAVGSRTSS). The first 50 residues, 1–50 (MVGDARPSGVRAGGCRGAVGSRTSSRALRPPLPPLSSLFVLFLAAPCAWA), serve as a signal peptide directing secretion. Residues H73 and D75 each coordinate Zn(2+). A glycan (N-linked (GlcNAc...) asparagine) is linked at N134. D197 is a Zn(2+) binding site. The Nucleophile role is filled by D197. C269 and C274 are oxidised to a cystine. An N-linked (GlcNAc...) asparagine glycan is attached at N369. Zn(2+) is bound at residue H448. The cysteines at positions 495 and 503 are disulfide-linked. N-linked (GlcNAc...) asparagine glycosylation is present at N499. The propeptide occupies 591–621 (SRDLVIQNEYLRARFDPNTGLLMELENLEQN). N-linked (GlcNAc...) asparagine glycosylation is found at N634, N640, N681, N755, and N919.

It belongs to the glycosyl hydrolase 38 family. In terms of assembly, homodimer. The cofactor is Zn(2+). Post-translationally, processed into 5 peptides of 35/38 kDa (A), 11/13 kDa (B) and 22 kDa (C), 38 kDa (D) and 13/15 kDa (E). The A, B and C peptides are disulfide-linked into a 67 kDa complex. Heavily glycosylated. Some sugar chains are of the high-mannose type.

The protein resides in the lysosome. It catalyses the reaction Hydrolysis of terminal, non-reducing alpha-D-mannose residues in alpha-D-mannosides.. Functionally, necessary for the catabolism of N-linked carbohydrates released during glycoprotein turnover. This chain is Lysosomal alpha-mannosidase (MAN2B1), found in Bos taurus (Bovine).